Consider the following 207-residue polypeptide: A-type ATP synthase subunit E (207 aa).

The protein belongs to the V-ATPase E subunit family. Has multiple subunits with at least A(3), B(3), C, D, E, F, H, I and proteolipid K(x).

Its subcellular location is the cell membrane. Functionally, component of the A-type ATP synthase that produces ATP from ADP in the presence of a proton gradient across the membrane. In Hyperthermus butylicus (strain DSM 5456 / JCM 9403 / PLM1-5), this protein is A-type ATP synthase subunit E.